The sequence spans 140 residues: Cysteine desulfuration protein SufE (140 aa).

Cysteine 51 serves as the catalytic Cysteine persulfide intermediate.

It belongs to the SufE family. Homodimer. Interacts with SufS.

It is found in the cytoplasm. Its pathway is cofactor biosynthesis; iron-sulfur cluster biosynthesis. Participates in cysteine desulfuration mediated by SufS. Cysteine desulfuration mobilizes sulfur from L-cysteine to yield L-alanine and constitutes an essential step in sulfur metabolism for biosynthesis of a variety of sulfur-containing biomolecules. Functions as a sulfur acceptor for SufS, by mediating the direct transfer of the sulfur atom from the S-sulfanylcysteine of SufS, an intermediate product of cysteine desulfuration process. In Yersinia pseudotuberculosis serotype O:1b (strain IP 31758), this protein is Cysteine desulfuration protein SufE.